The chain runs to 456 residues: Glycerol-3-phosphate acyltransferase 4 (456 aa).

An N-terminal signal peptide occupies residues M1–G37. The next 2 helical transmembrane spans lie at I156–L176 and I180–L200. N-linked (GlcNAc...) asparagine glycosylation occurs at N247. The HXXXXD motif signature appears at H248–D253. N-linked (GlcNAc...) asparagine glycans are attached at residues N327, N328, and N362.

It belongs to the 1-acyl-sn-glycerol-3-phosphate acyltransferase family. As to expression, ubiquitous. High levels in testis. Relatively high level of expression in skeletal muscle and heart. Relatively low level of expression in lung.

It is found in the endoplasmic reticulum membrane. The enzyme catalyses sn-glycerol 3-phosphate + an acyl-CoA = a 1-acyl-sn-glycero-3-phosphate + CoA. It catalyses the reaction dodecanoyl-CoA + sn-glycerol 3-phosphate = 1-dodecanoyl-sn-glycerol 3-phosphate + CoA. The catalysed reaction is sn-glycerol 3-phosphate + hexadecanoyl-CoA = 1-hexadecanoyl-sn-glycero-3-phosphate + CoA. It carries out the reaction sn-glycerol 3-phosphate + octadecanoyl-CoA = 1-octadecanoyl-sn-glycero-3-phosphate + CoA. The enzyme catalyses sn-glycerol 3-phosphate + (9Z)-octadecenoyl-CoA = 1-(9Z-octadecenoyl)-sn-glycero-3-phosphate + CoA. It catalyses the reaction (9Z,12Z)-octadecadienoyl-CoA + sn-glycerol 3-phosphate = 1-(9Z,12Z)-octadecadienoyl-sn-glycero-3-phosphate + CoA. It functions in the pathway phospholipid metabolism; CDP-diacylglycerol biosynthesis; CDP-diacylglycerol from sn-glycerol 3-phosphate: step 1/3. Its activity is regulated as follows. Inhibited by N-ethylmaleimide (NEM). Functionally, converts glycerol-3-phosphate to 1-acyl-sn-glycerol-3-phosphate (lysophosphatidic acid or LPA) by incorporating an acyl moiety at the sn-1 position of the glycerol backbone. Active against both saturated and unsaturated long-chain fatty acyl-CoAs. Protects cells against lipotoxicity. This is Glycerol-3-phosphate acyltransferase 4 from Homo sapiens (Human).